Consider the following 586-residue polypeptide: Scavenger receptor cysteine-rich domain-containing group B protein (586 aa).

The interval 1 to 33 is disordered; it reads MGPSERPSIGWTPKEAEMQIGPQPDGWSRGWKP. A signal peptide spans 1–58; it reads MGPSERPSIGWTPKEAEMQIGPQPDGWSRGWKPGDRGAVPLPLSPALSFLLLFPLASA. SRCR domains lie at 69–169, 200–300, 355–455, and 484–584; these read LRLV…VLCD, VRLV…VLCA, LRLV…ALCA, and LRLA…VLCQ. Intrachain disulfides connect C94–C158, C107–C168, C138–C148, C225–C289, C238–C299, C269–C279, C380–C444, C393–C454, C424–C434, C509–C573, C522–C583, and C553–C563.

It localises to the secreted. In Mus musculus (Mouse), this protein is Scavenger receptor cysteine-rich domain-containing group B protein.